Consider the following 316-residue polypeptide: NADH-quinone oxidoreductase subunit H (316 aa).

8 helical membrane-spanning segments follow: residues 6–26, 74–94, 98–118, 145–165, 177–197, 233–253, 256–276, and 296–316; these read PAVV…LIWV, FVIA…VVPF, VGVI…SLAV, ISYE…AGSF, GWYV…AVAE, YLGI…GWLG, FLPP…FFIL, and VMLP…LSVP.

This sequence belongs to the complex I subunit 1 family. NDH-1 is composed of 14 different subunits. Subunits NuoA, H, J, K, L, M, N constitute the membrane sector of the complex.

The protein localises to the cell inner membrane. It carries out the reaction a quinone + NADH + 5 H(+)(in) = a quinol + NAD(+) + 4 H(+)(out). NDH-1 shuttles electrons from NADH, via FMN and iron-sulfur (Fe-S) centers, to quinones in the respiratory chain. The immediate electron acceptor for the enzyme in this species is believed to be ubiquinone. Couples the redox reaction to proton translocation (for every two electrons transferred, four hydrogen ions are translocated across the cytoplasmic membrane), and thus conserves the redox energy in a proton gradient. This subunit may bind ubiquinone. This is NADH-quinone oxidoreductase subunit H from Methylococcus capsulatus (strain ATCC 33009 / NCIMB 11132 / Bath).